The sequence spans 27 residues: Cupiennin-4a (27 aa).

Glu27 bears the Glutamic acid 1-amide mark.

In terms of tissue distribution, expressed by the venom gland.

The protein resides in the secreted. The polypeptide is Cupiennin-4a (Cupiennius salei (American wandering spider)).